The following is a 267-amino-acid chain: Phosphate import ATP-binding protein PstB 2 (267 aa).

The ABC transporter domain occupies 21–262; sequence LATKDLHVYY…AQCQSTNDYV (242 aa). Residue 53–60 participates in ATP binding; the sequence is GPSGCGKS.

It belongs to the ABC transporter superfamily. Phosphate importer (TC 3.A.1.7) family. The complex is composed of two ATP-binding proteins (PstB), two transmembrane proteins (PstC and PstA) and a solute-binding protein (PstS).

Its subcellular location is the cell membrane. It carries out the reaction phosphate(out) + ATP + H2O = ADP + 2 phosphate(in) + H(+). Its function is as follows. Part of the ABC transporter complex PstSACB involved in phosphate import. Responsible for energy coupling to the transport system. The polypeptide is Phosphate import ATP-binding protein PstB 2 (Streptococcus pyogenes serotype M1).